The chain runs to 205 residues: DNA-directed RNA polymerase subunit 5 (205 aa).

Belongs to the archaeal Rpo5/eukaryotic RPB5 RNA polymerase subunit family.

It is found in the virion. It catalyses the reaction RNA(n) + a ribonucleoside 5'-triphosphate = RNA(n+1) + diphosphate. In terms of biological role, DNA-dependent RNA polymerase catalyzes the transcription of DNA into RNA using the four ribonucleoside triphosphates as substrates. This Acanthamoeba polyphaga (Amoeba) protein is DNA-directed RNA polymerase subunit 5.